A 107-amino-acid polypeptide reads, in one-letter code: RNA silencing suppressor (107 aa).

The basic stretch occupies residues 46–49; it reads RRRR. A C4-type zinc finger spans residues 56 to 78; it reads CHRCYRVYPPLFPEISRCDNRTC.

The protein belongs to the carlaviruses nucleic acid-binding protein family.

Functionally, suppressor of viral-induced RNA silencing. The potential mechanism of action is based on sequestering siRNAs. This chain is RNA silencing suppressor, found in Chrysanthemum morifolium (Florist's daisy).